A 110-amino-acid polypeptide reads, in one-letter code: UPF0213 protein DP2720 (110 aa).

One can recognise a GIY-YIG domain in the interval 12-88 (PAWFVYIVQC…KQLSPTRKRT (77 aa)).

This sequence belongs to the UPF0213 family.

The chain is UPF0213 protein DP2720 from Desulfotalea psychrophila (strain LSv54 / DSM 12343).